The primary structure comprises 265 residues: Putative 2-aminoethylphosphonate transport system permease protein PhnV (265 aa).

6 helical membrane passes run 13 to 33, 69 to 89, 104 to 124, 131 to 151, 185 to 205, and 233 to 253; these read GVVASVLFIVFFFLPLAVILM, LTIGFCASLFALLCGVWAALA, VFYLPSAIPSVSVGLGILVAF, MNGTLWIVLTAHFVLISAFTF, LPLLMPWMVSALALSLSLSMG, and NIADGAALTIVLVAITLLLMM. Residues 65 to 253 enclose the ABC transmembrane type-1 domain; it reads LLASLTIGFC…LVAITLLLMM (189 aa).

Belongs to the binding-protein-dependent transport system permease family.

Its subcellular location is the cell inner membrane. Probably part of the PhnSTUV complex (TC 3.A.1.11.5) involved in 2-aminoethylphosphonate import. Probably responsible for the translocation of the substrate across the membrane. This chain is Putative 2-aminoethylphosphonate transport system permease protein PhnV (phnV), found in Salmonella paratyphi A (strain ATCC 9150 / SARB42).